A 328-amino-acid polypeptide reads, in one-letter code: tRNA uridine(34) hydroxylase (328 aa).

The region spanning 130-224 (LDKDTVVLDT…YGKDPEVQGE (95 aa)) is the Rhodanese domain. Cys184 acts as the Cysteine persulfide intermediate in catalysis.

It belongs to the TrhO family.

It carries out the reaction uridine(34) in tRNA + AH2 + O2 = 5-hydroxyuridine(34) in tRNA + A + H2O. Its function is as follows. Catalyzes oxygen-dependent 5-hydroxyuridine (ho5U) modification at position 34 in tRNAs. The chain is tRNA uridine(34) hydroxylase from Streptococcus pneumoniae (strain Hungary19A-6).